The following is a 758-amino-acid chain: DNA ligase (758 aa).

A disordered region spans residues 1-28 (MPENFGAMRQDGLVSTSESDSPAPAATP). Residues 60 to 64 (DAEFD), 109 to 110 (SL), and glutamate 148 contribute to the NAD(+) site. The active-site N6-AMP-lysine intermediate is the lysine 150. The NAD(+) site is built by arginine 171, glutamate 208, lysine 324, and lysine 348. Zn(2+) contacts are provided by cysteine 442, cysteine 445, cysteine 461, and cysteine 467. The BRCT domain maps to 660-749 (SVRRTLAGLT…PDHSAEAEEN (90 aa)). The tract at residues 735–758 (LLAHGPDHSAEAEENESEGSTTND) is disordered.

This sequence belongs to the NAD-dependent DNA ligase family. LigA subfamily. It depends on Mg(2+) as a cofactor. Requires Mn(2+) as cofactor.

The enzyme catalyses NAD(+) + (deoxyribonucleotide)n-3'-hydroxyl + 5'-phospho-(deoxyribonucleotide)m = (deoxyribonucleotide)n+m + AMP + beta-nicotinamide D-nucleotide.. Its function is as follows. DNA ligase that catalyzes the formation of phosphodiester linkages between 5'-phosphoryl and 3'-hydroxyl groups in double-stranded DNA using NAD as a coenzyme and as the energy source for the reaction. It is essential for DNA replication and repair of damaged DNA. This Renibacterium salmoninarum (strain ATCC 33209 / DSM 20767 / JCM 11484 / NBRC 15589 / NCIMB 2235) protein is DNA ligase.